The primary structure comprises 359 residues: 3-dehydroquinate synthase (359 aa).

NAD(+)-binding positions include 106 to 110 (GVVGD), 130 to 131 (TS), Lys143, and Lys152. 3 residues coordinate Zn(2+): Glu185, His246, and His262.

Belongs to the sugar phosphate cyclases superfamily. Dehydroquinate synthase family. It depends on NAD(+) as a cofactor. The cofactor is Co(2+). Requires Zn(2+) as cofactor.

The protein localises to the cytoplasm. The catalysed reaction is 7-phospho-2-dehydro-3-deoxy-D-arabino-heptonate = 3-dehydroquinate + phosphate. Its pathway is metabolic intermediate biosynthesis; chorismate biosynthesis; chorismate from D-erythrose 4-phosphate and phosphoenolpyruvate: step 2/7. In terms of biological role, catalyzes the conversion of 3-deoxy-D-arabino-heptulosonate 7-phosphate (DAHP) to dehydroquinate (DHQ). The polypeptide is 3-dehydroquinate synthase (Lactiplantibacillus plantarum (strain ATCC BAA-793 / NCIMB 8826 / WCFS1) (Lactobacillus plantarum)).